The chain runs to 100 residues: NADH-quinone oxidoreductase subunit K (100 aa).

Helical transmembrane passes span 4-24 (YEYY…GVIV), 28-48 (IIAM…AFVA), and 60-80 (VFVF…LGLI).

This sequence belongs to the complex I subunit 4L family. In terms of assembly, NDH-1 is composed of 14 different subunits. Subunits NuoA, H, J, K, L, M, N constitute the membrane sector of the complex.

Its subcellular location is the cell inner membrane. The enzyme catalyses a quinone + NADH + 5 H(+)(in) = a quinol + NAD(+) + 4 H(+)(out). In terms of biological role, NDH-1 shuttles electrons from NADH, via FMN and iron-sulfur (Fe-S) centers, to quinones in the respiratory chain. The immediate electron acceptor for the enzyme in this species is believed to be ubiquinone. Couples the redox reaction to proton translocation (for every two electrons transferred, four hydrogen ions are translocated across the cytoplasmic membrane), and thus conserves the redox energy in a proton gradient. The polypeptide is NADH-quinone oxidoreductase subunit K (Sulfurihydrogenibium azorense (strain DSM 15241 / OCM 825 / Az-Fu1)).